Consider the following 320-residue polypeptide: Malate dehydrogenase (320 aa).

NAD(+) is bound by residues 10–15 (GAGQIG) and Asp34. 2 residues coordinate substrate: Arg83 and Arg89. NAD(+)-binding positions include Asn96 and 119-121 (ITN). Substrate is bound by residues Asn121 and Arg152. His176 (proton acceptor) is an active-site residue.

This sequence belongs to the LDH/MDH superfamily. MDH type 3 family.

The catalysed reaction is (S)-malate + NAD(+) = oxaloacetate + NADH + H(+). Its function is as follows. Catalyzes the reversible oxidation of malate to oxaloacetate. The sequence is that of Malate dehydrogenase from Methylorubrum extorquens (strain CM4 / NCIMB 13688) (Methylobacterium extorquens).